Here is a 337-residue protein sequence, read N- to C-terminus: Ribosomal RNA small subunit methyltransferase C (337 aa).

It belongs to the methyltransferase superfamily. RsmC family. Monomer.

Its subcellular location is the cytoplasm. It catalyses the reaction guanosine(1207) in 16S rRNA + S-adenosyl-L-methionine = N(2)-methylguanosine(1207) in 16S rRNA + S-adenosyl-L-homocysteine + H(+). Functionally, specifically methylates the guanine in position 1207 of 16S rRNA in the 30S particle. In Acinetobacter baumannii (strain AB307-0294), this protein is Ribosomal RNA small subunit methyltransferase C.